A 58-amino-acid chain; its full sequence is Large ribosomal subunit protein uL30 (58 aa).

The protein belongs to the universal ribosomal protein uL30 family. In terms of assembly, part of the 50S ribosomal subunit.

The chain is Large ribosomal subunit protein uL30 from Acinetobacter baylyi (strain ATCC 33305 / BD413 / ADP1).